Here is a 22-residue protein sequence, read N- to C-terminus: Cysteine-rich venom protein collettin-a (22 aa).

The segment covering 1-15 (SNKKNYQKEIVDKHN) has biased composition (basic and acidic residues). The interval 1-22 (SNKKNYQKEIVDKHNALRRSVK) is disordered.

It belongs to the CRISP family. In terms of processing, contains 8 disulfide bonds. As to expression, expressed by the venom gland.

The protein resides in the secreted. The polypeptide is Cysteine-rich venom protein collettin-a (Pseudechis colletti (Collett's snake)).